The primary structure comprises 456 residues: uncharacterized protein (456 aa).

In terms of domain architecture, TRAM spans 3–61; that stretch reads LMRKNETREFLIEDIEFPAVGVAFYNDKKVYIKGAVPGQKVLARVSKVRREKIEAKLKE. 4 residues coordinate [4Fe-4S] cluster: Cys74, Cys80, Cys83, and Cys163. Residues Gln289, Tyr318, Glu339, and Asp384 each coordinate S-adenosyl-L-methionine. Cys411 acts as the Nucleophile in catalysis.

Belongs to the class I-like SAM-binding methyltransferase superfamily. RNA M5U methyltransferase family.

This is an uncharacterized protein from Clostridium acetobutylicum (strain ATCC 824 / DSM 792 / JCM 1419 / IAM 19013 / LMG 5710 / NBRC 13948 / NRRL B-527 / VKM B-1787 / 2291 / W).